The chain runs to 391 residues: Argininosuccinate synthase (391 aa).

6–14 (AYSGGLDTT) contacts ATP. Tyr-84 is an L-citrulline binding site. Gly-114 is an ATP binding site. L-aspartate is bound by residues Thr-116, Asn-120, and Asp-121. Asn-120 contacts L-citrulline. L-citrulline is bound by residues Arg-124, Ser-171, Ser-180, Glu-253, and Tyr-265.

Belongs to the argininosuccinate synthase family. Type 1 subfamily. In terms of assembly, homotetramer.

It is found in the cytoplasm. It catalyses the reaction L-citrulline + L-aspartate + ATP = 2-(N(omega)-L-arginino)succinate + AMP + diphosphate + H(+). It participates in amino-acid biosynthesis; L-arginine biosynthesis; L-arginine from L-ornithine and carbamoyl phosphate: step 2/3. The protein is Argininosuccinate synthase of Saccharolobus solfataricus (strain ATCC 35092 / DSM 1617 / JCM 11322 / P2) (Sulfolobus solfataricus).